An 818-amino-acid polypeptide reads, in one-letter code: Serine/threonine-protein phosphatase 4 regulatory subunit 3 (818 aa).

The WH1 domain occupies 1–100; the sequence is MTDTRRRVKV…DEIWEKICQV (100 aa). Residues 718-818 are disordered; that stretch reads LAKSSFSGRQ…PPSKKSRLSS (101 aa). Residues 721-730 show a composition bias toward polar residues; sequence SSFSGRQNPS. Over residues 736-756 the composition is skewed to low complexity; it reads SGSTKTSLSSPPPSASLSPGS. Acidic residues predominate over residues 788–804; that stretch reads YPDDDEEEEDDDDEESK.

The protein belongs to the SMEK family. As to quaternary structure, serine/threonine-protein phosphatase 4 (PP4) occurs in different assemblies of the catalytic and one or more regulatory subunits.

Its function is as follows. Regulatory subunit of serine/threonine-protein phosphatase 4. This is Serine/threonine-protein phosphatase 4 regulatory subunit 3 (smek1) from Tetraodon nigroviridis (Spotted green pufferfish).